A 364-amino-acid chain; its full sequence is Alanine racemase (364 aa).

Lysine 34 serves as the catalytic Proton acceptor; specific for D-alanine. At lysine 34 the chain carries N6-(pyridoxal phosphate)lysine. Arginine 129 serves as a coordination point for substrate. The active-site Proton acceptor; specific for L-alanine is tyrosine 259. Methionine 307 contacts substrate.

The protein belongs to the alanine racemase family. Pyridoxal 5'-phosphate is required as a cofactor.

It carries out the reaction L-alanine = D-alanine. It participates in amino-acid biosynthesis; D-alanine biosynthesis; D-alanine from L-alanine: step 1/1. In terms of biological role, catalyzes the interconversion of L-alanine and D-alanine. May also act on other amino acids. In Coxiella burnetii (strain CbuG_Q212) (Coxiella burnetii (strain Q212)), this protein is Alanine racemase (alr).